Reading from the N-terminus, the 324-residue chain is Olfactory receptor 52I1 (324 aa).

At 1–29 (MLGPAYNHTMETPASFLLVGIPGLQSSHL) the chain is on the extracellular side. A glycan (N-linked (GlcNAc...) asparagine) is linked at Asn7. A helical transmembrane segment spans residues 30-50 (WLAISLSAMYITALLGNTLIV). At 51-58 (TAIWMDST) the chain is on the cytoplasmic side. A helical membrane pass occupies residues 59 to 79 (RHEPMYCFLCVLAAVDIVMAS). Topologically, residues 80 to 103 (SVVPKMVSIFCSGDSSISFSACFT) are extracellular. A disulfide bond links Cys101 and Cys193. The helical transmembrane segment at 104 to 124 (QMFFVHLATAVETGLLLTMAF) threads the bilayer. Topologically, residues 125-143 (DRYVAICKPLHYKRILTPQ) are cytoplasmic. The chain crosses the membrane as a helical span at residues 144–164 (VMLGMSMAVTIRAVTFMTPLS). Topologically, residues 165–200 (WMMNHLPFCGSNVVVHSYCKHIALARLACADPVPSS) are extracellular. The chain crosses the membrane as a helical span at residues 201–221 (LYSLIGSSLMVGSDVAFIAAS). Topologically, residues 222-241 (YILILRAVFDLSSKTAQLKA) are cytoplasmic. A helical transmembrane segment spans residues 242–262 (LSTCGSHVGVMALYYLPGMAS). The Extracellular portion of the chain corresponds to 263–278 (IYAAWLGQDIVPLHTQ). Residues 279-299 (VLLADLYVIIPATLNPIIYGM) form a helical membrane-spanning segment. Residues 300–324 (RTKQLLEGIWSYLMHFLFDHSNLGS) are Cytoplasmic-facing.

This sequence belongs to the G-protein coupled receptor 1 family.

It is found in the cell membrane. Odorant receptor. In Homo sapiens (Human), this protein is Olfactory receptor 52I1 (OR52I1).